Reading from the N-terminus, the 486-residue chain is Sensor protein PhoQ (486 aa).

Topologically, residues 1–16 are cytoplasmic; it reads MKKLLHLFFPLSLRVR. The chain crosses the membrane as a helical span at residues 17–37; it reads FLLATAAVVLVLSLAYGMVAL. The Periplasmic portion of the chain corresponds to 38–194; it reads IGYSVSFDKT…LKSSYMVWSW (157 aa). A divalent metal cation-binding residues include aspartate 151 and aspartate 152. The chain crosses the membrane as a helical span at residues 195–215; sequence FIYVLSANLLLVIPLLWVAAW. The region spanning 215–266 is the HAMP domain; that stretch reads WWSLRPIEALAKEVRELEEHNRELLNPATTRELTSLVRNLNRLLKSERERYD. The Cytoplasmic portion of the chain corresponds to 216–486; sequence WSLRPIEALA…GRQHSAPKDE (271 aa). The Histidine kinase domain maps to 274–480; that stretch reads DLTHSLKTPL…RMEVIFGRQH (207 aa). Position 277 is a phosphohistidine; by autocatalysis (histidine 277). Asparagine 385 lines the Mg(2+) pocket. Residues 385-393, 415-420, and 434-446 contribute to the ATP site; these read NVLDNACKY, DDGPGI, and RVDT…GVGL. A Mg(2+)-binding site is contributed by glutamine 442.

In terms of assembly, homodimer.

The protein resides in the cell inner membrane. The enzyme catalyses ATP + protein L-histidine = ADP + protein N-phospho-L-histidine.. Member of the two-component regulatory system PhoP/PhoQ involved in virulence, adaptation to low Mg(2+) environments and the control of acid resistance genes. In low periplasmic Mg(2+), PhoQ functions as a membrane-associated protein kinase that undergoes autophosphorylation and subsequently transfers the phosphate to PhoP, resulting in the expression of PhoP-activated genes (PAG) and repression of PhoP-repressed genes (PRG). In high periplasmic Mg(2+), acts as a protein phosphatase that dephosphorylates phospho-PhoP, which results in the repression of PG and may lead to expression of some PRG. The protein is Sensor protein PhoQ (phoQ) of Escherichia coli O6:H1 (strain CFT073 / ATCC 700928 / UPEC).